The primary structure comprises 174 residues: Shikimate kinase 2 (174 aa).

12–17 (GAGKTT) is an ATP binding site. Positions 16 and 32 each coordinate Mg(2+). Substrate contacts are provided by Asp-34, Arg-58, and Gly-79. The LID domain stretch occupies residues 112–126 (AEDPEEAQRPSLTGK). Arg-120 provides a ligand contact to ATP. Residue Arg-139 participates in substrate binding. Gln-155 is a binding site for ATP.

It belongs to the shikimate kinase family. AroL subfamily. As to quaternary structure, monomer. It depends on Mg(2+) as a cofactor.

The protein resides in the cytoplasm. The catalysed reaction is shikimate + ATP = 3-phosphoshikimate + ADP + H(+). It participates in metabolic intermediate biosynthesis; chorismate biosynthesis; chorismate from D-erythrose 4-phosphate and phosphoenolpyruvate: step 5/7. In terms of biological role, catalyzes the specific phosphorylation of the 3-hydroxyl group of shikimic acid using ATP as a cosubstrate. In Yersinia pseudotuberculosis serotype IB (strain PB1/+), this protein is Shikimate kinase 2.